The chain runs to 279 residues: Zinc-finger homeodomain protein 1 (279 aa).

Residues Met-1–Val-30 show a composition bias toward acidic residues. A disordered region spans residues Met-1 to Phe-62. The ZF-HD dimerization-type zinc finger occupies Phe-75–Glu-124. Disordered stretches follow at residues Phe-128 to Thr-199 and Asn-245 to Pro-279. The span at Gln-134–Gly-143 shows a compositional bias: pro residues. Positions Arg-191–Pro-254 form a DNA-binding region, homeobox; atypical.

As to quaternary structure, homo- and heterodimer with other ZFHD proteins. Interacts with MIF1 and MIF2; these interactions prevent nuclear localization and DNA-binding to inhibit transcription regulation activity. Binds to ZHD2, ZHD3, ZHD4, ZHD5, ZHD6, ZHD7, ZHD8, ZHD9, ZHD10 and ZHD11. In terms of tissue distribution, mostly expressed in flowers and inflorescence.

Its subcellular location is the nucleus. Putative transcription factor. This is Zinc-finger homeodomain protein 1 (ZHD1) from Arabidopsis thaliana (Mouse-ear cress).